A 509-amino-acid chain; its full sequence is Citrinin biosynthesis transcriptional activator mrl3 (509 aa).

A disordered region spans residues 1 to 22 (MASTAHRQPSRPTTRQRQRTGR). The segment at residues 24-51 (CEECRRRKLRCDGQQPRCGVCVDSGVTC) is a DNA-binding region (zn(2)-C6 fungal-type). The interval 97–143 (STPLTNDHHDGCSVSSASSRSDSNPPPTVSEPDMSLPNTTTSVSSAP) is disordered. Residues 109-119 (SVSSASSRSDS) are compositionally biased toward low complexity. Residues 132 to 143 (LPNTTTSVSSAP) are compositionally biased toward polar residues.

It is found in the nucleus. Its function is as follows. Transcription factor that regulates the expression of the gene cluster that mediates the biosynthesis of the mycotoxin citrinin, a hepato-nephrotoxic compound to humans due to inhibition of respiration complex III. This Monascus ruber (Mold) protein is Citrinin biosynthesis transcriptional activator mrl3.